A 137-amino-acid chain; its full sequence is Large ribosomal subunit protein uL16 (137 aa).

The protein belongs to the universal ribosomal protein uL16 family. Part of the 50S ribosomal subunit.

Binds 23S rRNA and is also seen to make contacts with the A and possibly P site tRNAs. This Streptococcus mutans serotype c (strain ATCC 700610 / UA159) protein is Large ribosomal subunit protein uL16.